The primary structure comprises 210 residues: High mobility group protein B2 (210 aa).

Lys3 carries the N6-acetyllysine modification. Residues 9-79 (PRGKMSSYAF…RYDREMKNYV (71 aa)) constitute a DNA-binding region (HMG box 1). Cys23 bears the Cysteine sulfonic acid (-SO3H); alternate mark. Cys23 and Cys45 are oxidised to a cystine. An N6-acetyllysine modification is found at Lys30. Ser35 is subject to Phosphoserine. At Lys43 the chain carries N6-acetyllysine. Cys45 carries the cysteine sulfonic acid (-SO3H); alternate modification. The segment covering 51-76 (TMSAKEKSKFEDLAKSDKARYDREMK) has biased composition (basic and acidic residues). A disordered region spans residues 51–102 (TMSAKEKSKFEDLAKSDKARYDREMKNYVPPKGDKKGKKKDPNAPKRPPSAF). An N6-acetyllysine modification is found at Lys90. The segment at residues 95 to 163 (PKRPPSAFFL…KYEKDIAAYR (69 aa)) is a DNA-binding region (HMG box 2). Ser100 carries the phosphoserine modification. Cys106 carries the cysteine sulfonic acid (-SO3H) modification. Residues Lys114 and Lys141 each carry the N6-acetyllysine modification. Residues 162 to 172 (YRAKGKSEVGK) show a composition bias toward basic and acidic residues. The interval 162 to 210 (YRAKGKSEVGKKGPGRPTGSKKKNEPEDEEEEEEEEDDEDEEEEDEDEE) is disordered. Positions 165–180 (KGKSEVGKKGPGRPTG) are required for chemotactic activity. The span at 187-210 (PEDEEEEEEEEDDEDEEEEDEDEE) shows a compositional bias: acidic residues.

The protein belongs to the HMGB family. As to quaternary structure, interacts with POU2F2, POU2F1 and POU3F1. Component of the RAG complex composed of core components RAG1 and RAG2, and associated component HMGB1 or HMGB2. Component of the SET complex, composed of at least ANP32A, APEX1, HMGB2, NME1, SET and TREX1. Directly interacts with SET. Interacts with LEF1. Post-translationally, reduction/oxidation of cysteine residues Cys-23, Cys-45 and Cys-106 and a possible intramolecular disulfide bond involving Cys-23 and Cys-45 give rise to different redox forms with specific functional activities in various cellular compartments: 1- fully reduced HMGB2 (HMGB2C23hC45hC106h), 2- disulfide HMGB2 (HMGB2C23-C45C106h) and 3- sulfonyl HMGB2 (HMGB2C23soC45soC106so).

It is found in the nucleus. The protein resides in the chromosome. Its subcellular location is the cytoplasm. It localises to the secreted. Functionally, multifunctional protein with various roles in different cellular compartments. May act in a redox sensitive manner. In the nucleus is an abundant chromatin-associated non-histone protein involved in transcription, chromatin remodeling and V(D)J recombination and probably other processes. Binds DNA with a preference to non-canonical DNA structures such as single-stranded DNA. Can bent DNA and enhance DNA flexibility by looping thus providing a mechanism to promote activities on various gene promoters by enhancing transcription factor binding and/or bringing distant regulatory sequences into close proximity. Involved in V(D)J recombination by acting as a cofactor of the RAG complex: acts by stimulating cleavage and RAG protein binding at the 23 bp spacer of conserved recombination signal sequences (RSS). Proposed to be involved in the innate immune response to nucleic acids by acting as a cytoplasmic promiscuous immunogenic DNA/RNA sensor which cooperates with subsequent discriminative sensing by specific pattern recognition receptors. In the extracellular compartment acts as a chemokine. Promotes proliferation and migration of endothelial cells implicating AGER/RAGE. Has antimicrobial activity in gastrointestinal epithelial tissues. Involved in inflammatory response to antigenic stimulus coupled with pro-inflammatory activity. May play a role in germ cell differentiation. Involved in modulation of neurogenesis probably by regulation of neural stem proliferation. Involved in articular cartilage surface maintenance implicating LEF1 and the Wnt/beta-catenin pathway. This Rattus norvegicus (Rat) protein is High mobility group protein B2 (Hmgb2).